A 198-amino-acid chain; its full sequence is Protein RD3-like (198 aa).

Residues 28 to 57 (KTLLRELKWHLKERERLIQEIENEQKVKKT) are a coiled coil. Residues 133–168 (GSEQEDLEDSGSMDCSAPSVIQGDSSKRADKDEIPT) form a disordered region. Positions 157–166 (SSKRADKDEI) are enriched in basic and acidic residues.

This Homo sapiens (Human) protein is Protein RD3-like (RD3L).